We begin with the raw amino-acid sequence, 285 residues long: Elongation factor Ts (285 aa).

An involved in Mg(2+) ion dislocation from EF-Tu region spans residues 75 to 78 (TDFV).

Belongs to the EF-Ts family.

Its subcellular location is the cytoplasm. Its function is as follows. Associates with the EF-Tu.GDP complex and induces the exchange of GDP to GTP. It remains bound to the aminoacyl-tRNA.EF-Tu.GTP complex up to the GTP hydrolysis stage on the ribosome. The polypeptide is Elongation factor Ts (Alcanivorax borkumensis (strain ATCC 700651 / DSM 11573 / NCIMB 13689 / SK2)).